The primary structure comprises 75 residues: CLAVATA3/ESR (CLE)-related protein 2 (75 aa).

Residues M1–G22 form the signal peptide. The interval P40–H75 is disordered. Hydroxyproline occurs at positions 67 and 70. P70 is a glycosylation site (O-linked (Ara...) hydroxyproline).

It belongs to the CLV3/ESR signal peptide family. Interacts with the extracellular leucine-rich repeat region of CLV1. Post-translationally, the O-glycosylation (arabinosylation) of the hydroxyproline Pro-70 enhances binding affinity of the CLE2p peptide for its receptor. Mostly expressed in roots and seedlings, and, to a lower extent, in apex.

Its subcellular location is the secreted. It localises to the extracellular space. Extracellular signal peptide that regulates cell fate. May act with CLV1 as a ligand-receptor pair in a signal transduction pathway, coordinating growth between adjacent meristematic regions. In Arabidopsis thaliana (Mouse-ear cress), this protein is CLAVATA3/ESR (CLE)-related protein 2.